The following is a 291-amino-acid chain: Small ribosomal subunit biogenesis GTPase RsgA 2 (291 aa).

A CP-type G domain is found at 63–221 (ENALVRPPVA…VADTPGFSSI (159 aa)). GTP contacts are provided by residues 112 to 115 (SKMD) and 164 to 172 (GQSGVGKST). Zn(2+)-binding residues include C245, C250, H252, and C258.

It belongs to the TRAFAC class YlqF/YawG GTPase family. RsgA subfamily. As to quaternary structure, monomer. Associates with 30S ribosomal subunit, binds 16S rRNA. Zn(2+) is required as a cofactor.

The protein resides in the cytoplasm. In terms of biological role, one of several proteins that assist in the late maturation steps of the functional core of the 30S ribosomal subunit. Helps release RbfA from mature subunits. May play a role in the assembly of ribosomal proteins into the subunit. Circularly permuted GTPase that catalyzes slow GTP hydrolysis, GTPase activity is stimulated by the 30S ribosomal subunit. This is Small ribosomal subunit biogenesis GTPase RsgA 2 from Listeria innocua serovar 6a (strain ATCC BAA-680 / CLIP 11262).